Consider the following 223-residue polypeptide: Protein DEHYDRATION-INDUCED 19 homolog 3 (223 aa).

Thr114 is modified (phosphothreonine). At Ser116 the chain carries Phosphoserine.

The protein belongs to the Di19 family. Phosphorylated in vitro by CPK3 or CPK11. Expressed in seedlings, roots, leaves, stems, flowers and siliques.

The protein resides in the nucleus. In Arabidopsis thaliana (Mouse-ear cress), this protein is Protein DEHYDRATION-INDUCED 19 homolog 3 (DI19-3).